An 855-amino-acid chain; its full sequence is Inactive rhomboid protein 1 (855 aa).

Over 1-411 (MSEARRDSTS…HRPFFTYWLT (411 aa)) the chain is Cytoplasmic. Phosphoserine occurs at positions 76 and 176. Phosphothreonine is present on residues T180 and T183. Phosphoserine is present on S390. The chain crosses the membrane as a helical span at residues 412-432 (FVHSLVTILAVCIYGIAPVGF). Topologically, residues 433-655 (SQHETVDSVL…NPEVPDQFYR (223 aa)) are lumenal. The N-linked (GlcNAc...) asparagine glycan is linked to N583. The chain crosses the membrane as a helical span at residues 656–676 (LWLSLFLHAGILHCLVSICFQ). At 677–691 (MTVLRDLEKLAGWHR) the chain is on the cytoplasmic side. Residues 692–712 (IAIIYLLSGVTGNLASAIFLP) traverse the membrane as a helical segment. At 713–714 (YR) the chain is on the lumenal side. Residues 715–735 (AEVGPAGSQFGILACLFVELF) form a helical membrane-spanning segment. Over 736–746 (QSWQILARPWR) the chain is Cytoplasmic. A helical transmembrane segment spans residues 747-767 (AFFKLLAVVLFLFTFGLLPWI). Residues 768 to 772 (DNFAH) are Lumenal-facing. The helical transmembrane segment at 773–793 (ISGFISGLFLSFAFLPYISFG) threads the bilayer. The Cytoplasmic portion of the chain corresponds to 794–803 (KFDLYRKRCQ). A helical membrane pass occupies residues 804–824 (IIIFQVVFLGLLAGLVVLFYV). Residues 825 to 855 (YPVRCEWCEFLTCIPFTDKFCEKYELDAQLH) lie on the Lumenal side of the membrane.

This sequence belongs to the peptidase S54 family. As to quaternary structure, homodimer, or homooligomer. Interacts with TGFA and HBEGF. Interacts with EGF; may retain EGF in the endoplasmic reticulum and regulates its degradation through the endoplasmic reticulum-associated degradation (ERAD). Interacts (via cytoplasmic N-terminus) with FRMD8/iTAP; this interaction leads to mutual protein stabilization. Interacts with ADAM17/TACE. Post-translationally, N-glycosylated. In terms of tissue distribution, highly expressed in cerebellum, cerebrum, heart, skeletal muscle, placenta, pancreatic islet and testis. Detected at lower levels in colon, kidney, small intestine and lung.

It is found in the endoplasmic reticulum membrane. It localises to the golgi apparatus membrane. Functionally, regulates ADAM17 protease, a sheddase of the epidermal growth factor (EGF) receptor ligands and TNF, thereby plays a role in sleep, cell survival, proliferation, migration and inflammation. Does not exhibit any protease activity on its own. This is Inactive rhomboid protein 1 (RHBDF1) from Homo sapiens (Human).